A 174-amino-acid polypeptide reads, in one-letter code: MIDADGYRPNVGMIICNEQNQVLWAKRRGENAWQFPQGGIDYAETPEQAMFRELEEEVGTAKVCIIGRTRGWLRYEVPCARHRVSRRRYRGQKQIWFLLRFEGEEAEINLRTRQPEFEDWRWVDYWMPVNEIISFKRRVYWQALQELAPLINMNPPPMTDPCRSENRHPVVGNR.

In terms of domain architecture, Nudix hydrolase spans 6-145; the sequence is GYRPNVGMII…KRRVYWQALQ (140 aa). A Nudix box motif is present at residues 38 to 59; that stretch reads GGIDYAETPEQAMFRELEEEVG.

It belongs to the Nudix hydrolase family. RppH subfamily. It depends on a divalent metal cation as a cofactor.

Functionally, accelerates the degradation of transcripts by removing pyrophosphate from the 5'-end of triphosphorylated RNA, leading to a more labile monophosphorylated state that can stimulate subsequent ribonuclease cleavage. In Acidithiobacillus ferrooxidans (strain ATCC 53993 / BNL-5-31) (Leptospirillum ferrooxidans (ATCC 53993)), this protein is RNA pyrophosphohydrolase.